The sequence spans 141 residues: Hemoglobin subunit alpha (141 aa).

The Globin domain maps to Val-1 to Arg-141. Ser-3 is modified (phosphoserine). Lys-7 is modified (N6-succinyllysine). Thr-8 carries the post-translational modification Phosphothreonine. Position 11 is an N6-succinyllysine (Lys-11). At Lys-16 the chain carries N6-acetyllysine; alternate. Lys-16 carries the N6-succinyllysine; alternate modification. Position 24 is a phosphotyrosine (Tyr-24). Residue Ser-35 is modified to Phosphoserine. Lys-40 carries the post-translational modification N6-succinyllysine. At Ser-49 the chain carries Phosphoserine. His-58 is an O2 binding site. His-87 serves as a coordination point for heme b. Ser-102 is modified (phosphoserine). Thr-108 bears the Phosphothreonine mark. Phosphoserine occurs at positions 124 and 131. Phosphothreonine occurs at positions 134 and 137. Position 138 is a phosphoserine (Ser-138).

This sequence belongs to the globin family. As to quaternary structure, heterotetramer of two alpha chains and two beta chains. In terms of tissue distribution, red blood cells.

Involved in oxygen transport from the lung to the various peripheral tissues. In terms of biological role, hemopressin acts as an antagonist peptide of the cannabinoid receptor CNR1. Hemopressin-binding efficiently blocks cannabinoid receptor CNR1 and subsequent signaling. In Trichechus inunguis (Amazon manatee), this protein is Hemoglobin subunit alpha (HBA).